Reading from the N-terminus, the 467-residue chain is Glutamate--tRNA ligase (467 aa).

The 'HIGH' region motif lies at 9–19 (PSPTGYLHIGG). A 'KMSKS' region motif is present at residues 237 to 241 (KLSKR). Residue K240 participates in ATP binding.

This sequence belongs to the class-I aminoacyl-tRNA synthetase family. Glutamate--tRNA ligase type 1 subfamily. As to quaternary structure, monomer.

It is found in the cytoplasm. It carries out the reaction tRNA(Glu) + L-glutamate + ATP = L-glutamyl-tRNA(Glu) + AMP + diphosphate. Functionally, catalyzes the attachment of glutamate to tRNA(Glu) in a two-step reaction: glutamate is first activated by ATP to form Glu-AMP and then transferred to the acceptor end of tRNA(Glu). The chain is Glutamate--tRNA ligase from Xanthomonas euvesicatoria pv. vesicatoria (strain 85-10) (Xanthomonas campestris pv. vesicatoria).